The sequence spans 450 residues: Tubulin alpha-3E chain (450 aa).

The short motif at 1 to 4 (MREC) is the MREC motif element. Gln-11 provides a ligand contact to GTP. Lys-40 is modified (N6-acetyllysine). Glu-71, Ser-140, Gly-144, Thr-145, Thr-179, Asn-206, and Asn-228 together coordinate GTP. Position 71 (Glu-71) interacts with Mg(2+). The active site involves Glu-254. At Tyr-282 the chain carries 3'-nitrotyrosine. At Ser-439 the chain carries Phosphoserine. Tyr-450 carries the post-translational modification 3'-nitrotyrosine.

Belongs to the tubulin family. As to quaternary structure, dimer of alpha and beta chains. A typical microtubule is a hollow water-filled tube with an outer diameter of 25 nm and an inner diameter of 15 nM. Alpha-beta heterodimers associate head-to-tail to form protofilaments running lengthwise along the microtubule wall with the beta-tubulin subunit facing the microtubule plus end conferring a structural polarity. Microtubules usually have 13 protofilaments but different protofilament numbers can be found in some organisms and specialized cells. The cofactor is Mg(2+). Post-translationally, some glutamate residues at the C-terminus are polyglutamylated, resulting in polyglutamate chains on the gamma-carboxyl group. Polyglutamylation plays a key role in microtubule severing by spastin (SPAST). SPAST preferentially recognizes and acts on microtubules decorated with short polyglutamate tails: severing activity by SPAST increases as the number of glutamates per tubulin rises from one to eight, but decreases beyond this glutamylation threshold. Glutamylation is also involved in cilia motility. Some glutamate residues at the C-terminus are monoglycylated but not polyglycylated due to the absence of functional TTLL10 in human. Monoglycylation is mainly limited to tubulin incorporated into cilia and flagella axonemes, which is required for their stability and maintenance. Flagella glycylation controls sperm motility. Both polyglutamylation and monoglycylation can coexist on the same protein on adjacent residues, and lowering glycylation levels increases polyglutamylation, and reciprocally. In terms of processing, acetylation of alpha chains at Lys-40 is located inside the microtubule lumen. This modification has been correlated with increased microtubule stability, intracellular transport and ciliary assembly. Post-translationally, methylation of alpha chains at Lys-40 is found in mitotic microtubules and is required for normal mitosis and cytokinesis contributing to genomic stability. Nitration of Tyr-450 is irreversible and interferes with normal dynein intracellular distribution. In terms of processing, undergoes a tyrosination/detyrosination cycle, the cyclic removal and re-addition of a C-terminal tyrosine residue by the enzymes tubulin tyrosine carboxypeptidase (MATCAP1/KIAA0895L, VASH1 or VASH2) and tubulin tyrosine ligase (TTL), respectively. Post-translationally, tyrosination promotes microtubule interaction with CAP-Gly domain-containing proteins such as CLIP1, CLIP2 and DCTN1. Tyrosination regulates the initiation of dynein-dynactin motility via interaction with DCTN1, which brings the dynein-dynactin complex into contact with microtubules. In neurons, tyrosinated tubulins mediate the initiation of retrograde vesicle transport. Detyrosination is involved in metaphase plate congression by guiding chromosomes during mitosis: detyrosination promotes interaction with CENPE, promoting pole-proximal transport of chromosomes toward the equator. Detyrosination increases microtubules-dependent mechanotransduction in dystrophic cardiac and skeletal muscle. In cardiomyocytes, detyrosinated microtubules are required to resist to contractile compression during contraction: detyrosination promotes association with desmin (DES) at force-generating sarcomeres, leading to buckled microtubules and mechanical resistance to contraction.

Its subcellular location is the cytoplasm. The protein resides in the cytoskeleton. It carries out the reaction GTP + H2O = GDP + phosphate + H(+). In terms of biological role, tubulin is the major constituent of microtubules, a cylinder consisting of laterally associated linear protofilaments composed of alpha- and beta-tubulin heterodimers. Microtubules grow by the addition of GTP-tubulin dimers to the microtubule end, where a stabilizing cap forms. Below the cap, tubulin dimers are in GDP-bound state, owing to GTPase activity of alpha-tubulin. The polypeptide is Tubulin alpha-3E chain (TUBA3E) (Homo sapiens (Human)).